Consider the following 340-residue polypeptide: Cell growth-regulated gene 1 protein (340 aa).

It belongs to the SMP-30/CGR1 family.

Functionally, involved in the cell growth regulation. The sequence is that of Cell growth-regulated gene 1 protein (CGR1) from Candida albicans (strain SC5314 / ATCC MYA-2876) (Yeast).